A 314-amino-acid polypeptide reads, in one-letter code: Olfactory receptor 1E2 (314 aa).

The Extracellular portion of the chain corresponds to 1-25 (MMGQNQTSISDFLLLGLPIQPEQQN). Residue Asn5 is glycosylated (N-linked (GlcNAc...) asparagine). The chain crosses the membrane as a helical span at residues 26–49 (LCYALFLAMYLTTLLGNLLIIVLI). Over 50 to 57 (RLDSHLHT) the chain is Cytoplasmic. The helical transmembrane segment at 58–79 (PMYLFLSNLSFSDLCFSSVTIP) threads the bilayer. The Extracellular portion of the chain corresponds to 80 to 100 (KLLQNMQNQDPSIPYADCLTQ). Cys97 and Cys189 form a disulfide bridge. Residues 101–120 (MHFFLLFGDLESFLLVAMAY) traverse the membrane as a helical segment. Topologically, residues 121-139 (DRYVAICFPLHYTAIMSPM) are cytoplasmic. Residues 140 to 158 (LCLSVVALSWVLTTFHAML) traverse the membrane as a helical segment. The Extracellular segment spans residues 159-196 (HTLLMARLCFCADNVIPHFFCDMSALLKLACSDTRVNE). A helical transmembrane segment spans residues 197 to 219 (WVIFIMGGLIVVIPFLLILGSYA). At 220 to 236 (RIVSSILKVPSFKGICK) the chain is on the cytoplasmic side. The helical transmembrane segment at 237–260 (ALSTCGSHLSVVSLFYGTVIGLYL) threads the bilayer. Residues 261–272 (CPSANSSTLKDT) are Extracellular-facing. An N-linked (GlcNAc...) asparagine glycan is attached at Asn265. Residues 273–292 (VMAMMYTVVTPMLNPFIYSL) traverse the membrane as a helical segment. Residues 293–314 (RNRDMKGALERVICKRKNPFLL) lie on the Cytoplasmic side of the membrane.

It belongs to the G-protein coupled receptor 1 family.

The protein localises to the cell membrane. Odorant receptor. In Pan troglodytes (Chimpanzee), this protein is Olfactory receptor 1E2 (OR1E2).